An 80-amino-acid polypeptide reads, in one-letter code: Large ribosomal subunit protein uL29 (80 aa).

The protein belongs to the universal ribosomal protein uL29 family.

In Saccharopolyspora erythraea (strain ATCC 11635 / DSM 40517 / JCM 4748 / NBRC 13426 / NCIMB 8594 / NRRL 2338), this protein is Large ribosomal subunit protein uL29.